A 359-amino-acid chain; its full sequence is UDP-3-O-acylglucosamine N-acyltransferase (359 aa).

The active-site Proton acceptor is histidine 253.

It belongs to the transferase hexapeptide repeat family. LpxD subfamily. Homotrimer.

The catalysed reaction is a UDP-3-O-[(3R)-3-hydroxyacyl]-alpha-D-glucosamine + a (3R)-hydroxyacyl-[ACP] = a UDP-2-N,3-O-bis[(3R)-3-hydroxyacyl]-alpha-D-glucosamine + holo-[ACP] + H(+). It functions in the pathway bacterial outer membrane biogenesis; LPS lipid A biosynthesis. In terms of biological role, catalyzes the N-acylation of UDP-3-O-acylglucosamine using 3-hydroxyacyl-ACP as the acyl donor. Is involved in the biosynthesis of lipid A, a phosphorylated glycolipid that anchors the lipopolysaccharide to the outer membrane of the cell. The polypeptide is UDP-3-O-acylglucosamine N-acyltransferase (Burkholderia cenocepacia (strain ATCC BAA-245 / DSM 16553 / LMG 16656 / NCTC 13227 / J2315 / CF5610) (Burkholderia cepacia (strain J2315))).